We begin with the raw amino-acid sequence, 504 residues long: Lysine--tRNA ligase (504 aa).

Residues Glu-414 and Glu-421 each contribute to the Mg(2+) site.

This sequence belongs to the class-II aminoacyl-tRNA synthetase family. In terms of assembly, homodimer. Mg(2+) serves as cofactor.

The protein resides in the cytoplasm. It catalyses the reaction tRNA(Lys) + L-lysine + ATP = L-lysyl-tRNA(Lys) + AMP + diphosphate. This Photorhabdus laumondii subsp. laumondii (strain DSM 15139 / CIP 105565 / TT01) (Photorhabdus luminescens subsp. laumondii) protein is Lysine--tRNA ligase.